The sequence spans 692 residues: Serine/threonine-protein phosphatase PP-Z1 (692 aa).

Disordered regions lie at residues 1–309 and 321–357; these read MGNS…DIEN and ENVNDKNNNITDSKKDPNEEFNDIMQSSGNKNAPKKF. Gly2 carries N-myristoyl glycine lipidation. Composition is skewed to low complexity over residues 32–41, 49–69, and 91–122; these read SHSVKSAKSN, SLPSSSTTNTNSNVPDPSTPS, and SSSHSHSNSQNELLTTPSSSSTKRPSTSRRSS. Ser49 is subject to Phosphoserine. Over residues 170–179 the composition is skewed to acidic residues; it reads LTDDDNDDKD. Phosphothreonine is present on Thr171. Over residues 190–204 the composition is skewed to low complexity; that stretch reads RSSNSRPSSIRSGSV. Residues 207-216 are compositionally biased toward basic and acidic residues; sequence RKSDVTHEEP. A phosphoserine mark is found at Ser209 and Ser222. Polar residues-rich tracts occupy residues 217–229 and 251–267; these read NNGSYSSNNQENY and FGSDGNTAYSTPLNSPG. At Thr261 the chain carries Phosphothreonine. Phosphoserine is present on Ser265. The segment covering 280-289 has biased composition (low complexity); that stretch reads TSNSTSSLNH. A compositionally biased stretch (basic and acidic residues) spans 291-303; it reads SSRDIYPSKHISN. The segment covering 321–331 has biased composition (polar residues); it reads ENVNDKNNNIT. The Mn(2+) site is built by Asp419, His421, Asp447, and Asn479. The active-site Proton donor is the His480. Residues His528 and His603 each contribute to the Mn(2+) site. Positions 672–692 are disordered; the sequence is LANQQQQMMETSITNDNESQQ. Polar residues predominate over residues 673–692; that stretch reads ANQQQQMMETSITNDNESQQ. Residue Ser690 is modified to Phosphoserine.

The protein belongs to the PPP phosphatase family. PP-Z subfamily. In terms of assembly, interacts with SIS2 and VHS3, which regulate its activity. It depends on Mn(2+) as a cofactor.

The catalysed reaction is O-phospho-L-seryl-[protein] + H2O = L-seryl-[protein] + phosphate. The enzyme catalyses O-phospho-L-threonyl-[protein] + H2O = L-threonyl-[protein] + phosphate. Inhibited by the regulatory subunits VHS3 and SIS2. Its function is as follows. Essential for the maintenance of cell size and integrity in response to osmotic stress. The sequence is that of Serine/threonine-protein phosphatase PP-Z1 (PPZ1) from Saccharomyces cerevisiae (strain ATCC 204508 / S288c) (Baker's yeast).